A 296-amino-acid polypeptide reads, in one-letter code: Fructose-bisphosphate aldolase class 1 (296 aa).

Glutamate 175 acts as the Proton acceptor in catalysis. Lysine 212 functions as the Schiff-base intermediate with dihydroxyacetone-P in the catalytic mechanism.

The protein belongs to the class I fructose-bisphosphate aldolase family.

The enzyme catalyses beta-D-fructose 1,6-bisphosphate = D-glyceraldehyde 3-phosphate + dihydroxyacetone phosphate. The protein operates within carbohydrate degradation; glycolysis; D-glyceraldehyde 3-phosphate and glycerone phosphate from D-glucose: step 4/4. The chain is Fructose-bisphosphate aldolase class 1 from Staphylococcus aureus (strain bovine RF122 / ET3-1).